The primary structure comprises 127 residues: Holo-[acyl-carrier-protein] synthase (127 aa).

The Mg(2+) site is built by Asp9 and Glu58.

Belongs to the P-Pant transferase superfamily. AcpS family. Mg(2+) is required as a cofactor.

The protein resides in the cytoplasm. It carries out the reaction apo-[ACP] + CoA = holo-[ACP] + adenosine 3',5'-bisphosphate + H(+). Transfers the 4'-phosphopantetheine moiety from coenzyme A to a Ser of acyl-carrier-protein. The protein is Holo-[acyl-carrier-protein] synthase of Shewanella sp. (strain W3-18-1).